We begin with the raw amino-acid sequence, 508 residues long: Photosystem II CP47 reaction center protein (508 aa).

6 consecutive transmembrane segments (helical) span residues Ala21–Ser36, Ile101–Trp115, Gly140–Phe156, Ile203–Ser218, Val237–Val252, and Thr457–Arg472.

This sequence belongs to the PsbB/PsbC family. PsbB subfamily. As to quaternary structure, PSII is composed of 1 copy each of membrane proteins PsbA, PsbB, PsbC, PsbD, PsbE, PsbF, PsbH, PsbI, PsbJ, PsbK, PsbL, PsbM, PsbT, PsbX, PsbY, PsbZ, Psb30/Ycf12, at least 3 peripheral proteins of the oxygen-evolving complex and a large number of cofactors. It forms dimeric complexes. Requires Binds multiple chlorophylls. PSII binds additional chlorophylls, carotenoids and specific lipids. as cofactor.

The protein localises to the plastid. It is found in the chloroplast thylakoid membrane. Functionally, one of the components of the core complex of photosystem II (PSII). It binds chlorophyll and helps catalyze the primary light-induced photochemical processes of PSII. PSII is a light-driven water:plastoquinone oxidoreductase, using light energy to abstract electrons from H(2)O, generating O(2) and a proton gradient subsequently used for ATP formation. The polypeptide is Photosystem II CP47 reaction center protein (Secale cereale (Rye)).